Here is a 161-residue protein sequence, read N- to C-terminus: Myosin regulatory light chain A, smooth adductor muscle (161 aa).

Ala1 carries the blocked amino end (Ala) modification. EF-hand domains lie at 20–55 (KLMQ…LGRT) and 89–124 (DTEE…MGDN). The Ca(2+) site is built by Asp33, Asn35, Asp37, and Asp44.

Functionally, in molluscan muscle, calcium regulation is associated with myosin rather than with actin. Muscle myosin contains two types of light chains: the catalytic light chain, essential for ATPase activity, and the regulatory light chain, a calcium-binding protein responsible for Ca(2+) dependent binding and Ca(2+) dependent Mg-ATPase activity. The chain is Myosin regulatory light chain A, smooth adductor muscle from Mizuhopecten yessoensis (Japanese scallop).